The primary structure comprises 504 residues: Pre-mRNA-processing factor 19 (504 aa).

The residue at position 2 (Ser-2) is an N-acetylserine. Residues 2-73 form the U-box domain; the sequence is SLICSISNEV…KPPSATSIPA (72 aa). Residues 68–223 are may mediate interaction with PSMC5; sequence ATSIPAILKA…VGLHSASIPG (156 aa). Residues Lys-122, Lys-179, Lys-244, and Lys-261 each carry the N6-acetyllysine modification. The WD 1 repeat unit spans residues 219-259; the sequence is ASIPGILALDLCPSDTNKILTGGADKNVVVFDKSSEQILAT. WD repeat units follow at residues 262 to 301, 304 to 345, 348 to 387, 390 to 429, 433 to 472, and 473 to 503; these read GHTK…CVQV, AHES…TKVT, TSGC…NVAN, GHSG…NFKT, DNNF…LHFT, and EHSG…KFYS.

The protein belongs to the WD repeat PRP19 family. As to quaternary structure, homotetramer. Component of activated, catalytic and post-catalytic spliceosomes. Component of the Prp19 complex/PRP19C/Nineteen complex/NTC and related complexes described as PRP19-CDC5L splicing complex and PSO4 complex. A homotetramer of PRPF19, CDC5L, PLRG1 and BCAS2 constitute the core of those complexes. The interaction with CDC5L, PLRG1 and BCAS2 is direct within this core complex. At least three less stably associated proteins CTNNBL1, CWC15 and HSPA8 are found in the Prp19 complex. The Prp19 complex associates with the spliceosome during its assembly and remodeling recruiting additional proteins. Component of the XAB2 complex, a multimeric protein complex composed of XAB2, PRPF19, AQR, ZNF830, ISY1, and PPIE. Interacts with CWC22 and EIF4A3 in an RNA-independent manner. Interacts with RPA1 and RPA2; the PRP19-CDC5L complex is recruited to the sites of DNA repair where it interacts with the replication protein A complex (RPA). Interacts with SETMAR; required for SETMAR recruitment to site of DNA damage. Interacts with U2AF2; the interaction is direct and recruits the Prp19 complex to RNA polymerase II C-terminal domain (CTD) and the pre-mRNA. Interacts with PRPF3. Interacts with APEX1, DNTT and PSMB4. Interacts with PSMC5. Interacts with KNSTRN. Interacts (via N-terminus) with CDC5L. Interacts with KHDC4. Interacts with USB1. Interacts with DDX41.

It is found in the nucleus. Its subcellular location is the nucleoplasm. It localises to the cytoplasm. The protein localises to the cytoskeleton. The protein resides in the spindle. It is found in the lipid droplet. The catalysed reaction is S-ubiquitinyl-[E2 ubiquitin-conjugating enzyme]-L-cysteine + [acceptor protein]-L-lysine = [E2 ubiquitin-conjugating enzyme]-L-cysteine + N(6)-ubiquitinyl-[acceptor protein]-L-lysine.. It participates in protein modification; protein ubiquitination. Ubiquitin-protein ligase which is a core component of several complexes mainly involved pre-mRNA splicing and DNA repair. Required for pre-mRNA splicing as component of the spliceosome. Core component of the PRP19C/Prp19 complex/NTC/Nineteen complex which is part of the spliceosome and participates in its assembly, its remodeling and is required for its activity. During assembly of the spliceosome, mediates 'Lys-63'-linked polyubiquitination of the U4 spliceosomal protein PRPF3. Ubiquitination of PRPF3 allows its recognition by the U5 component PRPF8 and stabilizes the U4/U5/U6 tri-snRNP spliceosomal complex. Recruited to RNA polymerase II C-terminal domain (CTD) and the pre-mRNA, it may also couple the transcriptional and spliceosomal machineries. The XAB2 complex, which contains PRPF19, is also involved in pre-mRNA splicing, transcription and transcription-coupled repair. Beside its role in pre-mRNA splicing PRPF19, as part of the PRP19-CDC5L complex, plays a role in the DNA damage response/DDR. It is recruited to the sites of DNA damage by the RPA complex where PRPF19 directly ubiquitinates RPA1 and RPA2. 'Lys-63'-linked polyubiquitination of the RPA complex allows the recruitment of the ATR-ATRIP complex and the activation of ATR, a master regulator of the DNA damage response. May also play a role in DNA double-strand break (DSB) repair by recruiting the repair factor SETMAR to altered DNA. As part of the PSO4 complex may also be involved in the DNA interstrand cross-links/ICLs repair process. In addition, may also mediate 'Lys-48'-linked polyubiquitination of substrates and play a role in proteasomal degradation. May play a role in the biogenesis of lipid droplets. May play a role in neural differentiation possibly through its function as part of the spliceosome. The protein is Pre-mRNA-processing factor 19 (PRPF19) of Bos taurus (Bovine).